Here is a 91-residue protein sequence, read N- to C-terminus: Small ribosomal subunit protein bS20 (91 aa).

This sequence belongs to the bacterial ribosomal protein bS20 family.

Functionally, binds directly to 16S ribosomal RNA. The sequence is that of Small ribosomal subunit protein bS20 from Acidithiobacillus ferrooxidans (strain ATCC 23270 / DSM 14882 / CIP 104768 / NCIMB 8455) (Ferrobacillus ferrooxidans (strain ATCC 23270)).